The following is a 298-amino-acid chain: Ribosomal protein L11 methyltransferase (298 aa).

4 residues coordinate S-adenosyl-L-methionine: Thr152, Gly173, Asp195, and Asn234.

Belongs to the methyltransferase superfamily. PrmA family.

Its subcellular location is the cytoplasm. It catalyses the reaction L-lysyl-[protein] + 3 S-adenosyl-L-methionine = N(6),N(6),N(6)-trimethyl-L-lysyl-[protein] + 3 S-adenosyl-L-homocysteine + 3 H(+). Methylates ribosomal protein L11. In Ralstonia pickettii (strain 12J), this protein is Ribosomal protein L11 methyltransferase.